The primary structure comprises 495 residues: UDP-N-acetylmuramoyl-L-alanyl-D-glutamate--2,6-diaminopimelate ligase (495 aa).

The UDP-N-acetyl-alpha-D-muramoyl-L-alanyl-D-glutamate site is built by Leu-32 and Ser-34. Residue Gly-119–Thr-125 participates in ATP binding. UDP-N-acetyl-alpha-D-muramoyl-L-alanyl-D-glutamate-binding positions include Asn-160, Thr-161–Thr-162, Ser-188, Gln-194, and Arg-196. Lys-228 bears the N6-carboxylysine mark. Meso-2,6-diaminopimelate-binding positions include Arg-390, Asp-414–Arg-417, Gly-465, and Glu-469. Residues Asp-414–Arg-417 carry the Meso-diaminopimelate recognition motif motif.

This sequence belongs to the MurCDEF family. MurE subfamily. Mg(2+) serves as cofactor. Carboxylation is probably crucial for Mg(2+) binding and, consequently, for the gamma-phosphate positioning of ATP.

The protein localises to the cytoplasm. It carries out the reaction UDP-N-acetyl-alpha-D-muramoyl-L-alanyl-D-glutamate + meso-2,6-diaminopimelate + ATP = UDP-N-acetyl-alpha-D-muramoyl-L-alanyl-gamma-D-glutamyl-meso-2,6-diaminopimelate + ADP + phosphate + H(+). It participates in cell wall biogenesis; peptidoglycan biosynthesis. Functionally, catalyzes the addition of meso-diaminopimelic acid to the nucleotide precursor UDP-N-acetylmuramoyl-L-alanyl-D-glutamate (UMAG) in the biosynthesis of bacterial cell-wall peptidoglycan. The sequence is that of UDP-N-acetylmuramoyl-L-alanyl-D-glutamate--2,6-diaminopimelate ligase from Vibrio cholerae serotype O1 (strain ATCC 39315 / El Tor Inaba N16961).